The primary structure comprises 211 residues: DELTA-stichotoxin-Hmg2a (211 aa).

The N-terminal stretch at 1–19 (MNRLIVLFLIVTMICATIA) is a signal peptide. Positions 20 to 34 (VPSREELEDQKEYKR) are excised as a propeptide. The interval 37–46 (ALAGTIIEGA) is plays an important role in the hemolytic activity. The tract at residues 45–64 (GASLGFQILDKVLGELGKVS) is N-terminal region. Phosphocholine is bound by residues Ser-88, Val-121, Ser-139, Pro-141, Tyr-167, Tyr-171, and Tyr-172. Residues 139–154 (SVPFDYNFYSNWWDVK) form a trp-rich region, which is important for the binding to lipid membrane region. The short motif at 177-179 (RGD) is the Cell attachment site, crucial for protein stability element.

This sequence belongs to the actinoporin family. Sea anemone subfamily. Octamer or nonamer in membranes. Monomer in the soluble state.

It is found in the secreted. The protein localises to the nematocyst. Its subcellular location is the target cell membrane. Its function is as follows. Pore-forming protein that forms cations-selective hydrophilic pores of around 1 nm and causes cardiac stimulation and cytolysis. Pore formation is a multi-step process that involves specific recognition of membrane sphingomyelin (but neither cholesterol nor phosphatidylcholine) using aromatic rich region and adjacent phosphocholine (POC) binding site, firm binding to the membrane (mainly driven by hydrophobic interactions) accompanied by the transfer of the N-terminal region to the lipid-water interface and finally pore formation after oligomerization of monomers. The sequence is that of DELTA-stichotoxin-Hmg2a from Heteractis magnifica (Magnificent sea anemone).